Consider the following 80-residue polypeptide: MRKDIHPEYRPVVFMDTSTGYQFLSGSTKRSNETVEFEGETYPLIRVEISSDSHPFYTGRQKFTQADGRVDRFNKKYGLK.

Belongs to the bacterial ribosomal protein bL31 family. Type B subfamily. As to quaternary structure, part of the 50S ribosomal subunit.

The chain is Large ribosomal subunit protein bL31B from Streptococcus sanguinis (strain SK36).